We begin with the raw amino-acid sequence, 317 residues long: D-alanine--D-alanine ligase (317 aa).

In terms of domain architecture, ATP-grasp spans 103–299; that stretch reads KHIFHSLNID…FNELVKIIVE (197 aa). Residue 130–183 participates in ATP binding; that stretch reads KVDYPYVLKPINEGSSIGVHMIFSHEDYLELKNNSSTIMEKMIIEEYIPGIELH. The Mg(2+) site is built by Asp-251, Glu-265, and Asn-267.

The protein belongs to the D-alanine--D-alanine ligase family. The cofactor is Mg(2+). It depends on Mn(2+) as a cofactor.

It is found in the cytoplasm. It carries out the reaction 2 D-alanine + ATP = D-alanyl-D-alanine + ADP + phosphate + H(+). Its pathway is cell wall biogenesis; peptidoglycan biosynthesis. Its function is as follows. Cell wall formation. The chain is D-alanine--D-alanine ligase from Wolbachia pipientis subsp. Culex pipiens (strain wPip).